The following is a 123-amino-acid chain: uncharacterized protein (123 aa).

An N-terminal signal peptide occupies residues methionine 1–alanine 25. A compositionally biased stretch (low complexity) spans glutamate 40–lysine 53. Positions glutamate 40–valine 62 are disordered. HhH domains lie at threonine 60–tyrosine 90 and arginine 91–valine 120.

This is an uncharacterized protein from Escherichia coli (strain K12).